Reading from the N-terminus, the 312-residue chain is Olfactory receptor 51A7 (312 aa).

Topologically, residues 1 to 25 are extracellular; that stretch reads MSVLNNSEVKLFLLIGIPGLEHAHI. N5 carries N-linked (GlcNAc...) asparagine glycosylation. The helical transmembrane segment at 26 to 46 threads the bilayer; the sequence is WFSIPICLMYLLAIMGNCTIL. Over 47-54 the chain is Cytoplasmic; it reads FIIKTEPS. A helical membrane pass occupies residues 55 to 75; the sequence is LHEPMYYFLAMLAVSDMGLSL. Residues 76-99 lie on the Extracellular side of the membrane; sequence SSLPTMLRVFLFNAMGISPNACFA. C97 and C189 are disulfide-bonded. Residues 100–120 traverse the membrane as a helical segment; the sequence is QEFFIHGFTVMESSVLLIMSL. Over 121–139 the chain is Cytoplasmic; sequence DRFLAIHNPLRYSSILTSN. The chain crosses the membrane as a helical span at residues 140–160; sequence RVAKMGLILAIRSILLVIPFP. Topologically, residues 161–196 are extracellular; that stretch reads FTLRRLKYCQKNLLSHSYCLHQDTMKLACSDNKTNV. The N-linked (GlcNAc...) asparagine glycan is linked to N192. A helical transmembrane segment spans residues 197 to 216; it reads IYGFFIALCTMLDLALIVLS. The Cytoplasmic segment spans residues 217–236; sequence YVLILKTILSIASLAERLKA. Residues 237-257 form a helical membrane-spanning segment; the sequence is LNTCVSHICAVLTFYVPIITL. At 258–272 the chain is on the extracellular side; sequence AAMHHFAKHKSPLVV. Residues 273 to 293 form a helical membrane-spanning segment; it reads ILIADMFLLVPPLMNPIVYCV. Residues 294-312 lie on the Cytoplasmic side of the membrane; the sequence is KTRQIWEKILGKLLNVCGR.

The protein belongs to the G-protein coupled receptor 1 family.

The protein localises to the cell membrane. In terms of biological role, odorant receptor. This chain is Olfactory receptor 51A7 (OR51A7), found in Homo sapiens (Human).